The following is a 190-amino-acid chain: Apolipoprotein M (190 aa).

Positions 1 to 22 form a signal peptide, not cleaved; that stretch reads MFHQVWAALLSLYGLLFNSMNQ. 3 cysteine pairs are disulfide-bonded: Cys23–Cys169, Cys95–Cys185, and Cys130–Cys159. Tetradecanoate contacts are provided by Glu138 and Arg145.

It belongs to the calycin superfamily. Lipocalin family. Highly divergent. As to quaternary structure, interacts with LRP2; LRP2 mediates APOM renal uptake and subsequent lysosomal degradation. Expressed by the liver; secreted in plasma.

Its subcellular location is the secreted. Functionally, probably involved in lipid transport. Can bind sphingosine-1-phosphate, myristic acid, palmitic acid and stearic acid, retinol, all-trans-retinoic acid and 9-cis-retinoic acid. This Mus musculus (Mouse) protein is Apolipoprotein M (Apom).